A 1073-amino-acid chain; its full sequence is ATP-dependent helicase/deoxyribonuclease subunit B (1073 aa).

This sequence belongs to the helicase family. AddB/RexB type 2 subfamily. As to quaternary structure, heterodimer of AddA and RexB. Mg(2+) serves as cofactor.

Functionally, the heterodimer acts as both an ATP-dependent DNA helicase and an ATP-dependent, dual-direction single-stranded exonuclease. Recognizes the chi site generating a DNA molecule suitable for the initiation of homologous recombination. This subunit has 5' -&gt; 3' nuclease activity but not helicase activity. In Streptococcus equi subsp. zooepidemicus (strain MGCS10565), this protein is ATP-dependent helicase/deoxyribonuclease subunit B.